The primary structure comprises 451 residues: Phosphoglucosamine mutase (451 aa).

Ser-103 (phosphoserine intermediate) is an active-site residue. Residues Ser-103, Asp-243, Asp-245, and Asp-247 each contribute to the Mg(2+) site. Ser-103 is subject to Phosphoserine.

The protein belongs to the phosphohexose mutase family. Mg(2+) serves as cofactor. Post-translationally, activated by phosphorylation.

The enzyme catalyses alpha-D-glucosamine 1-phosphate = D-glucosamine 6-phosphate. Functionally, catalyzes the conversion of glucosamine-6-phosphate to glucosamine-1-phosphate. The protein is Phosphoglucosamine mutase of Levilactobacillus brevis (strain ATCC 367 / BCRC 12310 / CIP 105137 / JCM 1170 / LMG 11437 / NCIMB 947 / NCTC 947) (Lactobacillus brevis).